The chain runs to 251 residues: Seminal metalloprotease 1 (251 aa).

The signal sequence occupies residues 1–18 (MFPQIWGVIFLFTPTVFS). The region spanning 44–248 (NGIVNQIYHW…RKLNKMYRCP (205 aa)) is the Peptidase M12A domain. N-linked (GlcNAc...) asparagine glycosylation is found at Asn55 and Asn120. 2 cysteine pairs are disulfide-bonded: Cys87–Cys247 and Cys111–Cys136. Position 144 (His144) interacts with Zn(2+). The active site involves Glu145. Zn(2+) contacts are provided by His148 and His154. Asn185 is a glycosylation site (N-linked (GlcNAc...) asparagine).

Requires Zn(2+) as cofactor. Undergoes cleavage in the male during mating with a cleaved product detected in the ejaculatory duct and/or bulb of males by 8-10 minutes after the start of mating. Further cleavage occurs in the mated female. May undergo cleavage in a two-step process where it is first cleaved by Sems, making it susceptible to activational cleavage which may be carried out by another protease or by autocleavage. In terms of tissue distribution, produced in the male accessory glands and secreted into seminal fluid. In mated females, confined to the reproductive tract and also detected in eggs laid by mated females (at protein level).

It localises to the secreted. In terms of biological role, seminal fluid metalloprotease which is transferred to females during mating and is required for processing of two other seminal fluid proteins Acp26Aa and Acp36DE in mated females. This chain is Seminal metalloprotease 1, found in Drosophila melanogaster (Fruit fly).